Consider the following 544-residue polypeptide: MKKAVILFSLFCFLCAIPVVQAADTIFVRETRIPILIERQDNVLFYLRLDAKESQTLNDVVLNLGEGVNLSEIQSIKLYYGGTEALQDSGKKRFAPVGYISSNTPGKTLAANPSYSIKKSEVTNPGNQVVLKGDQKLFPGINYFWISLQMKPGTSLTSKVTADIASITLDGKKALLDVVSENGIEHRMGVGVRHAGDDNSAAFRIPGLVTTNKGTLLGVYDVRYNSSVDLQEHVDVGLSRSTDGGKTWEKMRLPLAFGEFGGLPAGQNGVGDPSILVDTKTNNVWVVAAWTHGMGNQRAWWSSHPGMDMNHTAQLVLAKSTDDGKTWSAPINITEQVKDPSWYFLLQGPGRGITMSDGTLVFPTQFIDSTRVPNAGIMYSKDGGKNWKMHNYARTNTTEAQVAEVEPGVLMLNMRDNRGGSRAVAITKDLGKTWTEHESSRKALPESVCMASLISVKAKDNVLGKDLLIFSNPNTTKGRYNTTIKISLDGGVTWSPEHQLLLDEGNNWGYSCLSMIDKETIGILYESSVAHMTFQAVKLKDIIK.

The signal sequence occupies residues 1-22; that stretch reads MKKAVILFSLFCFLCAIPVVQA. BNR repeat units follow at residues 239–250, 318–329, and 378–389; these read SRSTDGGKTWEK, AKSTDDGKTWSA, and MYSKDGGKNWKM. Residue glutamate 399 is part of the active site. Arginine 415 lines the substrate pocket. The BNR 4 repeat unit spans residues 425-436; the sequence is AITKDLGKTWTE. Arginine 479 lines the substrate pocket. The BNR 5 repeat unit spans residues 485 to 496; that stretch reads KISLDGGVTWSP.

The protein belongs to the glycosyl hydrolase 33 family.

It localises to the periplasm. The catalysed reaction is Hydrolysis of alpha-(2-&gt;3)-, alpha-(2-&gt;6)-, alpha-(2-&gt;8)- glycosidic linkages of terminal sialic acid residues in oligosaccharides, glycoproteins, glycolipids, colominic acid and synthetic substrates.. In terms of biological role, sialidases have been suggested to be pathogenic factors in microbial infections. The chain is Sialidase (nanH) from Bacteroides fragilis (strain YCH46).